A 166-amino-acid chain; its full sequence is Monothiol glutaredoxin-3 (166 aa).

Residues 56–159 (DSTDFEVFLE…STLDEWTHNK (104 aa)) enclose the Glutaredoxin domain. C76 provides a ligand contact to [2Fe-2S] cluster.

The protein belongs to the glutaredoxin family. Monothiol subfamily. As to quaternary structure, homodimer.

It is found in the nucleus. Its function is as follows. Monothiol glutaredoxin involved in the biogenesis of iron-sulfur clusters. Binds one iron-sulfur cluster per dimer. The iron-sulfur cluster is bound between subunits, and is complexed by a bound glutathione and a cysteine residue from each subunit. In Schizosaccharomyces pombe (strain 972 / ATCC 24843) (Fission yeast), this protein is Monothiol glutaredoxin-3 (grx3).